Consider the following 456-residue polypeptide: Bifunctional protein GlmU (456 aa).

A pyrophosphorylase region spans residues 1 to 229; that stretch reads MLNVVILAAG…GWETLGVNSR (229 aa). UDP-N-acetyl-alpha-D-glucosamine contacts are provided by residues 7 to 10, Lys21, Gln73, 78 to 79, 103 to 105, Gly139, Glu154, Asn169, and Asn227; these read LAAG, GT, and YGD. Residue Asp105 coordinates Mg(2+). Asn227 provides a ligand contact to Mg(2+). Residues 230–250 are linker; that stretch reads VQQAELERRWQQEQARRQLEA. The interval 251–456 is N-acetyltransferase; that stretch reads GVTLADPARF…EGWQRPQKKS (206 aa). Positions 333 and 351 each coordinate UDP-N-acetyl-alpha-D-glucosamine. His363 acts as the Proton acceptor in catalysis. UDP-N-acetyl-alpha-D-glucosamine is bound by residues Tyr366 and Asn377. Residues Ala380, 386–387, Ser405, Ala423, and Arg440 contribute to the acetyl-CoA site; that span reads NY.

In the N-terminal section; belongs to the N-acetylglucosamine-1-phosphate uridyltransferase family. This sequence in the C-terminal section; belongs to the transferase hexapeptide repeat family. Homotrimer. Mg(2+) is required as a cofactor.

It localises to the cytoplasm. The enzyme catalyses alpha-D-glucosamine 1-phosphate + acetyl-CoA = N-acetyl-alpha-D-glucosamine 1-phosphate + CoA + H(+). It carries out the reaction N-acetyl-alpha-D-glucosamine 1-phosphate + UTP + H(+) = UDP-N-acetyl-alpha-D-glucosamine + diphosphate. The protein operates within nucleotide-sugar biosynthesis; UDP-N-acetyl-alpha-D-glucosamine biosynthesis; N-acetyl-alpha-D-glucosamine 1-phosphate from alpha-D-glucosamine 6-phosphate (route II): step 2/2. Its pathway is nucleotide-sugar biosynthesis; UDP-N-acetyl-alpha-D-glucosamine biosynthesis; UDP-N-acetyl-alpha-D-glucosamine from N-acetyl-alpha-D-glucosamine 1-phosphate: step 1/1. It functions in the pathway bacterial outer membrane biogenesis; LPS lipid A biosynthesis. In terms of biological role, catalyzes the last two sequential reactions in the de novo biosynthetic pathway for UDP-N-acetylglucosamine (UDP-GlcNAc). The C-terminal domain catalyzes the transfer of acetyl group from acetyl coenzyme A to glucosamine-1-phosphate (GlcN-1-P) to produce N-acetylglucosamine-1-phosphate (GlcNAc-1-P), which is converted into UDP-GlcNAc by the transfer of uridine 5-monophosphate (from uridine 5-triphosphate), a reaction catalyzed by the N-terminal domain. The protein is Bifunctional protein GlmU of Bordetella petrii (strain ATCC BAA-461 / DSM 12804 / CCUG 43448).